The following is a 501-amino-acid chain: MSRYDSRTGDSTSYRDRRSDSGFGGTSSYGSSGSHTSSKKDNDGNESPRKLDLDGLTPFEKNFYVESPAVAAMTDTEVEEYRKLREITVEGKDIPKPVKSFRDVGFPDYVLEEVKKAGFTEPTPIQSQGWPMAMKGRDLIGIAETGSGKTLSYLLPAIVHVNAQPMLAHGDGPIVLVLAPTRELAVQIQQEASKFGSSSKIKTTCIYGGVPKGPQVRDLQKGVEIVIATPGRLIDMMESNNTNLRRVTYLVLDEADRMLDMGFDPQIRKIVSHIRPDRQTLYWSATWPKEVEQLSKKFLYNPYKVIIGSSDLKANRAIRQIVDVISESQKYNKLVKLLEDIMDGSRILVFLDTKKGCDQITRQLRMDGWPALSIHGDKSQAERDWVLSEFRSGKSPIMTATDVAARGLDVKDVKYVINYDFPGSLEDYVHRIGRTGRAGAKGTAYTFFTVANARFAKELTNILQEAGQKVSPELASMGRSTAPPPPGLGGFRDRGSRRGWS.

Basic and acidic residues-rich tracts occupy residues Met-1–Asp-20 and Ser-38–Leu-53. The segment at Met-1 to Leu-53 is disordered. Positions Lys-99–Ser-127 match the Q motif motif. Residues Trp-130–Val-305 form the Helicase ATP-binding domain. Ala-143–Thr-150 is a binding site for ATP. The DEAD box motif lies at Asp-253–Asp-256. In terms of domain architecture, Helicase C-terminal spans Lys-333–Gly-478. A disordered region spans residues Glu-473–Ser-501. The segment covering Phe-491–Ser-501 has biased composition (basic and acidic residues).

It belongs to the DEAD box helicase family. DDX5/DBP2 subfamily.

It localises to the nucleus. The catalysed reaction is ATP + H2O = ADP + phosphate + H(+). ATP-dependent RNA helicase involved nonsense-mediated mRNA decay and ribosome biogenesis through rRNA processing. This Arabidopsis thaliana (Mouse-ear cress) protein is DEAD-box ATP-dependent RNA helicase 20 (RH20).